A 343-amino-acid chain; its full sequence is Selenide, water dikinase (343 aa).

Residue U15 is part of the active site. Residue U15 is a non-standard amino acid, selenocysteine. ATP contacts are provided by residues K18 and 45 to 47 (TAD). D48 serves as a coordination point for Mg(2+). Residues D65, D88, and 135 to 137 (GHT) each bind ATP. Mg(2+) is bound at residue D88. D223 contacts Mg(2+).

The protein belongs to the selenophosphate synthase 1 family. Class I subfamily. As to quaternary structure, homodimer. It depends on Mg(2+) as a cofactor.

It carries out the reaction hydrogenselenide + ATP + H2O = selenophosphate + AMP + phosphate + 2 H(+). Its function is as follows. Synthesizes selenophosphate from selenide and ATP. The polypeptide is Selenide, water dikinase (Carboxydothermus hydrogenoformans (strain ATCC BAA-161 / DSM 6008 / Z-2901)).